The sequence spans 233 residues: PEP2-like protein NECHADRAFT_97050 (233 aa).

The protein belongs to the PEP2 family.

In terms of biological role, may contribute to the ability of the fungus to cause disease on pea plants. The protein is PEP2-like protein NECHADRAFT_97050 of Fusarium vanettenii (strain ATCC MYA-4622 / CBS 123669 / FGSC 9596 / NRRL 45880 / 77-13-4) (Fusarium solani subsp. pisi).